The primary structure comprises 350 residues: Glycerol-1-phosphate dehydrogenase [NAD(P)+] (350 aa).

NAD(+) is bound by residues 97–101 and 119–122; these read GSKID and TTPS. D124 is a binding site for substrate. S128 contacts NAD(+). D171 is a binding site for substrate. 2 residues coordinate Zn(2+): D171 and H251. H255 is a substrate binding site. Residue H267 participates in Zn(2+) binding.

The protein belongs to the glycerol-1-phosphate dehydrogenase family. Zn(2+) is required as a cofactor.

Its subcellular location is the cytoplasm. The catalysed reaction is sn-glycerol 1-phosphate + NAD(+) = dihydroxyacetone phosphate + NADH + H(+). The enzyme catalyses sn-glycerol 1-phosphate + NADP(+) = dihydroxyacetone phosphate + NADPH + H(+). It functions in the pathway membrane lipid metabolism; glycerophospholipid metabolism. Its function is as follows. Catalyzes the NAD(P)H-dependent reduction of dihydroxyacetonephosphate (DHAP or glycerone phosphate) to glycerol 1-phosphate (G1P). The G1P thus generated is used as the glycerophosphate backbone of phospholipids in the cellular membranes of Archaea. The polypeptide is Glycerol-1-phosphate dehydrogenase [NAD(P)+] (Picrophilus torridus (strain ATCC 700027 / DSM 9790 / JCM 10055 / NBRC 100828 / KAW 2/3)).